A 433-amino-acid polypeptide reads, in one-letter code: Zinc finger and SCAN domain-containing protein 4 (433 aa).

Residues 44 to 126 (RMVLNSFQDS…RFMEDLTDDS (83 aa)) enclose the SCAN box domain. Composition is skewed to polar residues over residues 162-184 (SAQTPREANMGTPSQTSQDTSLE) and 277-298 (QPEQSSPESALTHQSNEGNSTC). 2 disordered regions span residues 162-199 (SAQTPREANMGTPSQTSQDTSLETGEGCEDEQDGCNSS) and 272-298 (AGCISQPEQSSPESALTHQSNEGNSTC). C2H2-type zinc fingers lie at residues 312 to 334 (YKCEECPKVFKYLCHLLAHQRRH), 340 to 362 (FVCPECQKGFFQISDLRVHQIIH), 368 to 390 (FTCSMCEKSFSHKTNLRSHERIH), and 396 to 418 (YTCPFCKTSYRQSSTYHRHMRTH). A disordered region spans residues 414 to 433 (HMRTHEKITPPSVPSTPEAS).

The protein localises to the nucleus. The protein resides in the chromosome. It localises to the telomere. Embryonic stem (ES) cell-specific transcription factor required to regulate ES cell pluripotency. Binds telomeres and plays a key role in genomic stability in ES cells by regulating telomere elongation. Acts as an activator of spontaneous telomere sister chromatid exchange (T-SCE) and telomere elongation in undifferentiated ES cells. This chain is Zinc finger and SCAN domain-containing protein 4 (ZSCAN4), found in Pongo pygmaeus (Bornean orangutan).